The sequence spans 196 residues: Internal virion protein gp14 (196 aa).

This sequence belongs to the T7virus internal virion protein gp14 family. Interacts with the portal protein. Interacts with gp15.

The protein resides in the virion. It localises to the host cell outer membrane. In terms of biological role, component of the cylindrical core that assembles on the inner surface of the capsid during capsid formation and plays a role in viral DNA ejection into the host cell. The inner core is composed of stacked rings of gp14, gp15 and gp16 proteins. Following binding to the host cell surface, the internal core is disassembled and gp14 is ejected along with gp15 and gp16 into the infected cell. May form a simple channel spanning the outer membrane. This Escherichia phage T7 (Bacteriophage T7) protein is Internal virion protein gp14.